We begin with the raw amino-acid sequence, 397 residues long: Na(+)/H(+) antiporter NhaA 2 (397 aa).

A run of 11 helical transmembrane segments spans residues 9-29 (LHNPAASGILIFLAAVAAMAV), 59-79 (LLLWINDGLMAVFFLLVGLEL), 95-115 (ILPVVGAVGGIALPAAIYTLI), 125-145 (GWAIPTATDIAFALGILALLG), 154-174 (LFLLTLAIIDDLAAILIIAFF), 177-197 (SELSPASLMIAGSAIGTLILM), 222-242 (SGVHATLAGVVLGFVIPLKGE), 260-280 (VVGLGILPLFAFANAGVSLQG), 292-312 (LGIALGLFLGKQIGVFGFVWL), 332-352 (GVALLCGVGFTMSLFISSLAF), and 371-391 (LGILTGSILSGIFGYILLRFS).

The protein belongs to the NhaA Na(+)/H(+) (TC 2.A.33) antiporter family.

Its subcellular location is the cell inner membrane. It carries out the reaction Na(+)(in) + 2 H(+)(out) = Na(+)(out) + 2 H(+)(in). In terms of biological role, na(+)/H(+) antiporter that extrudes sodium in exchange for external protons. The polypeptide is Na(+)/H(+) antiporter NhaA 2 (Magnetococcus marinus (strain ATCC BAA-1437 / JCM 17883 / MC-1)).